Consider the following 262-residue polypeptide: Type III pantothenate kinase (262 aa).

Aspartate 6–valine 13 lines the ATP pocket. Residues tyrosine 100 and glycine 107–arginine 110 each bind substrate. Aspartate 109 functions as the Proton acceptor in the catalytic mechanism. Aspartate 129 is a binding site for K(+). An ATP-binding site is contributed by threonine 132. Residue threonine 184 participates in substrate binding.

It belongs to the type III pantothenate kinase family. Homodimer. Requires NH4(+) as cofactor. K(+) serves as cofactor.

It localises to the cytoplasm. The enzyme catalyses (R)-pantothenate + ATP = (R)-4'-phosphopantothenate + ADP + H(+). It functions in the pathway cofactor biosynthesis; coenzyme A biosynthesis; CoA from (R)-pantothenate: step 1/5. Functionally, catalyzes the phosphorylation of pantothenate (Pan), the first step in CoA biosynthesis. This chain is Type III pantothenate kinase, found in Bacillus cereus (strain B4264).